The sequence spans 110 residues: Nucleoid-associated protein Ent638_0951 (110 aa).

The protein belongs to the YbaB/EbfC family. In terms of assembly, homodimer.

Its subcellular location is the cytoplasm. The protein resides in the nucleoid. Its function is as follows. Binds to DNA and alters its conformation. May be involved in regulation of gene expression, nucleoid organization and DNA protection. This is Nucleoid-associated protein Ent638_0951 from Enterobacter sp. (strain 638).